Consider the following 202-residue polypeptide: LexA repressor (202 aa).

The H-T-H motif DNA-binding region spans 28–48 (RAEIAQRLGFRSPNAAEEHLK). Active-site for autocatalytic cleavage activity residues include Ser119 and Lys156.

Belongs to the peptidase S24 family. Homodimer.

The catalysed reaction is Hydrolysis of Ala-|-Gly bond in repressor LexA.. Represses a number of genes involved in the response to DNA damage (SOS response), including recA and lexA. Binds to the 16 bp palindromic sequence 5'-CTGTATATATATACAG-3'. In the presence of single-stranded DNA, RecA interacts with LexA causing an autocatalytic cleavage which disrupts the DNA-binding part of LexA, leading to derepression of the SOS regulon and eventually DNA repair. This chain is LexA repressor, found in Escherichia fergusonii (strain ATCC 35469 / DSM 13698 / CCUG 18766 / IAM 14443 / JCM 21226 / LMG 7866 / NBRC 102419 / NCTC 12128 / CDC 0568-73).